The primary structure comprises 64 residues: Purotoxin-2 (64 aa).

The tract at residues 1-44 (AKACTPLLHDCSHDRHSCCRGDMFKYVCDCFYPEGEDKTEVCSC) is knottin domain. Cystine bridges form between Cys4-Cys19, Cys11-Cys28, Cys18-Cys44, and Cys30-Cys42. Residues 45–64 (QQPKSHKIAEKIIDKAKTTL) form a linear cationic cytotoxin domain region. A Leucine amide modification is found at Leu64.

Belongs to the neurotoxin 19 (CSTX) family. 05 (U4-Lctx) subfamily. In terms of processing, amidation at Leu-64 is not mandatory for activity on P2RX3. As to expression, expressed by the venom gland.

It is found in the secreted. Its function is as follows. Enhances the high-affinity desensitization of human P2RX3 purinoceptors. At 50 nM, the toxin decreases the IC(50) for ambient ATP from 2.67 nM to 0.77 nM in human P2RX3. The sequence is that of Purotoxin-2 from Alopecosa marikovskyi (Wolf spider).